We begin with the raw amino-acid sequence, 347 residues long: GTPase Obg (347 aa).

One can recognise an Obg domain in the interval 1 to 159; that stretch reads MKFVDEATIK…RVLRLELKLL (159 aa). Positions 127–146 are disordered; it reads NTRYKTSTNRAPRQSKPGTP. The span at 129–138 shows a compositional bias: polar residues; the sequence is RYKTSTNRAP. The OBG-type G domain occupies 160 to 334; it reads ADVGLLGLPN…LMQAIMKYLE (175 aa). GTP contacts are provided by residues 166–173, 191–195, 213–216, 284–287, and 315–317; these read GLPNAGKS, FTTLY, DIPG, NKID, and SAA. Mg(2+) contacts are provided by serine 173 and threonine 193.

It belongs to the TRAFAC class OBG-HflX-like GTPase superfamily. OBG GTPase family. In terms of assembly, monomer. Mg(2+) serves as cofactor.

Its subcellular location is the cytoplasm. Functionally, an essential GTPase which binds GTP, GDP and possibly (p)ppGpp with moderate affinity, with high nucleotide exchange rates and a fairly low GTP hydrolysis rate. Plays a role in control of the cell cycle, stress response, ribosome biogenesis and in those bacteria that undergo differentiation, in morphogenesis control. The protein is GTPase Obg of Thioalkalivibrio sulfidiphilus (strain HL-EbGR7).